A 1564-amino-acid chain; its full sequence is NACHT domain- and WD repeat-containing protein 1 (1564 aa).

One can recognise an NACHT domain in the interval 335–661; it reads TPLVLFGPPG…LLAIAHRQLV (327 aa). 341–348 lines the ATP pocket; that stretch reads GPPGIGKT. 14 WD repeats span residues 866 to 905, 908 to 947, 956 to 994, 998 to 1037, 1044 to 1082, 1083 to 1121, 1126 to 1165, 1167 to 1207, 1212 to 1251, 1253 to 1290, 1291 to 1327, 1338 to 1376, 1380 to 1418, and 1425 to 1462; these read GCHK…VIHM, GHTG…EKFT, PAEP…PVFH, DASD…LQGK, KEET…LLEK, LPDA…RRFM, EHED…TLLD, LEGV…RSRV, LDRT…EQDS, DTSS…RQDV, ICIP…VLDI, GPRY…LYEC, KAFP…WDLQ, and EMSY…VWSV.

In terms of assembly, may interact with HSP90AA1, HSP90AB1 and BAG2. In terms of tissue distribution, expressed at highest levels in prostate, followed by testis, retina, trachea and optic nerve. Also detected in brain, epididymis, lung, vagina and pituitary. In the prostate, tends to be up-regulated during malignant progression compared to normal epithelium (at protein level).

Its subcellular location is the cytoplasm. The protein localises to the cytosol. In terms of biological role, may play a role in the control of androgen receptor (AR) protein steady-state levels. In Homo sapiens (Human), this protein is NACHT domain- and WD repeat-containing protein 1 (NWD1).